Reading from the N-terminus, the 687-residue chain is Sphingoid long chain base kinase 5 (687 aa).

A disordered region spans residues 1 to 20 (MTLKPSKRRKGRSRHSRKKQ). 2 S-palmitoyl cysteine; by AKR1 lipidation sites follow: cysteine 91 and cysteine 94. Positions 101–116 (IDRSETSTTDTSKDDL) are enriched in basic and acidic residues. Disordered stretches follow at residues 101–130 (IDRS…VNGQ) and 180–207 (DELE…SLLT). A compositionally biased stretch (low complexity) spans 193–207 (NSLSRGSNSSSSLLT). A DAGKc domain is found at 266–405 (RRNKSIFVII…IDLMCCSQPS (140 aa)). ATP contacts are provided by residues 276–278 (NPF) and threonine 308. A substrate-binding site is contributed by 333-336 (SGDG). The Proton donor/acceptor role is filled by aspartate 335. Residues glutamate 340, 366-368 (GSG), arginine 434, and arginine 440 each bind ATP. Acidic residues predominate over residues 506–524 (EYETENEDEDEDADADDED). Residues 506–525 (EYETENEDEDEDADADDEDS) form a disordered region. 652 to 654 (DGE) lines the ATP pocket.

The protein resides in the golgi apparatus membrane. It catalyses the reaction (4R)-hydroxysphinganine + ATP = (4R)-hydroxysphinganine 1-phosphate + ADP + H(+). The catalysed reaction is a sphingoid base + ATP = a sphingoid 1-phosphate + ADP + H(+). It carries out the reaction sphinganine + ATP = sphinganine 1-phosphate + ADP + H(+). Catalyzes the phosphorylation of the sphingoid long chain bases dihydrosphingosine (DHS or sphinganine) and phytosphingosine (PHS) to form dihydrosphingosine 1-phosphate (DHS-1P) and phytosphingosine 1-phosphate (PHS-1P) respectively. Redundant to LCB4, is only responsible for few percent of the total activity. Involved in the biosynthesis of sphingolipids and ceramides. Involved in heat-induced transient cell cycle arrest. Accumulation of phosphorylated sphingoid long chain bases (LCBPs) stimulates calcium influx and activates calcineurin signaling. Involved in heat-stress resistance. The polypeptide is Sphingoid long chain base kinase 5 (LCB5) (Saccharomyces cerevisiae (strain ATCC 204508 / S288c) (Baker's yeast)).